A 272-amino-acid chain; its full sequence is Putative phosphatase HI_0597 (272 aa).

Asp-11 acts as the Nucleophile in catalysis. Residue Asp-11 participates in Mg(2+) binding. Residue Leu-12 participates in phosphate binding. Asp-13 contributes to the Mg(2+) binding site. Phosphate is bound by residues 45 to 46 (TG) and Lys-195. Mg(2+) is bound at residue Asp-218. Asn-221 is a phosphate binding site.

The protein belongs to the HAD-like hydrolase superfamily. Cof family. Mg(2+) serves as cofactor.

This Haemophilus influenzae (strain ATCC 51907 / DSM 11121 / KW20 / Rd) protein is Putative phosphatase HI_0597.